We begin with the raw amino-acid sequence, 234 residues long: MKYGLLQENGKVAEFIQIKTIMKNVIANVSTAITLALMILWIKYPNRIEWEAIIGILLVIKEVTIRWQIGKIESLEFSPAISLAHGYVNNFLEPAINELLMKASNNINFSIYIPHDLEELSDQQIDRMKLQIEANGYRLKEIKLKKKTGRPHDLLLVEKQEGTLSYFDFPRTLLSLQSYIDYKVDSTKNEFSEEKKIAMGAKLVDAFHNEVDRLIKKKNLEGIVTFVSKDLELY.

The helical transmembrane segment at 20–42 threads the bilayer; it reads TIMKNVIANVSTAITLALMILWI.

The protein in the C-terminal section; belongs to the bacterial STING family.

It localises to the cell inner membrane. Functionally, effector protein of a CBASS antivirus system. CBASS (cyclic oligonucleotide-based antiphage signaling system) provides immunity against bacteriophage. The CD-NTase protein synthesizes cyclic nucleotides in response to infection; these serve as specific second messenger signals. The signals activate a diverse range of effectors, leading to bacterial cell death and thus abortive phage infection. A type I-D CBASS(GG) system. In terms of biological role, binds c-di-GMP (synthesized by the cognate CdnE encoded upstream in the same operon) and about 10-fold less well 3'3'-cGAMP, but not c-di-AMP, 2'3'-cGAMP or cUMP-AMP (tested with a protein without the transmembrane region). The effector protein for this CBASS system, its activity is stimulated by c-di-GMP and leads to cell death. The polypeptide is CD-NTase-associated protein 13 (Roseivirga ehrenbergii (strain DSM 102268 / JCM 13514 / KCTC 12282 / NCIMB 14502 / KMM 6017)).